A 404-amino-acid polypeptide reads, in one-letter code: O-methyltransferase GME11366 (404 aa).

S-adenosyl-L-methionine contacts are provided by residues 237 to 238 (GG), Asp-262, Arg-301, and Arg-302. His-305 serves as the catalytic Proton acceptor.

Belongs to the class I-like SAM-binding methyltransferase superfamily. Cation-independent O-methyltransferase family.

It functions in the pathway secondary metabolite biosynthesis. Its function is as follows. O-methyltransferase; part of the gene cluster that mediates the biosynthesis of dibenzodioxocinones such as pestalotiollide B, a novel class of inhibitors against cholesterol ester transfer protein (CEPT). The biosynthesis initiates from condensation of acetate and malonate units catalyzed by the non-reducing PKS pks8/GME11356. Pks8/GME11356 lacks a thioesterase (TE) domain, which is important to the cyclizing of the third ring of atrochrysone carboxylic acid, and the esterase GME11355 might play the role of TE and catalyzes the cyclization reaction of the C ring. The lactamase-like protein GME11357 (or other beta-lactamases in Pestalotiopsis microspora) probably hydrolyzes the thioester bond between the ACP of pks8/GME11356 and the intermediate to release atrochrysone carboxylic acid, which is spontaneously dehydrates to form endocrocin anthrone. Endocrocin anthrone is further converted to emodin via the endocrocin intermediate. Emodin is then oxidized by several enzymes such as the Baeyer-Villiger oxidase GME11358, the oxidoreductase GME11367, the short chain dehydrogenase/reductase GME11373, as well as by other oxidoreductases from the cluster, to modify the A and C rings and open the B ring, and finally yield monodictyphenone. The prenyltransferase GME11375 may catalyze the addition reaction between the C5 side chains and the carbon bone of dibenzodioxocinones. The remaining biochemical reactions to the final product dibenzodioxocinones should be methylation catalyzed by methyltransferase GME11366 and reduction and lactonization reaction catalyzed by a series of oxidordeuctases. In Pestalotiopsis microspora, this protein is O-methyltransferase GME11366.